The chain runs to 384 residues: tRNA-specific 2-thiouridylase MnmA (384 aa).

Residues 1-26 (MDEGIRASGGIRACQTGKQKQGRKRP) are disordered. ATP-binding positions include 36 to 43 (GMSGGVDS) and Met62. The interval 122–124 (NPD) is interaction with target base in tRNA. Cys127 (nucleophile) is an active-site residue. Cys127 and Cys223 are disulfide-bonded. Gly151 is a binding site for ATP. The interaction with tRNA stretch occupies residues 173–175 (KDQ). Residue Cys223 is the Cysteine persulfide intermediate of the active site. Positions 334 to 335 (RY) are interaction with tRNA.

It belongs to the MnmA/TRMU family.

The protein resides in the cytoplasm. It carries out the reaction S-sulfanyl-L-cysteinyl-[protein] + uridine(34) in tRNA + AH2 + ATP = 2-thiouridine(34) in tRNA + L-cysteinyl-[protein] + A + AMP + diphosphate + H(+). In terms of biological role, catalyzes the 2-thiolation of uridine at the wobble position (U34) of tRNA, leading to the formation of s(2)U34. The sequence is that of tRNA-specific 2-thiouridylase MnmA from Chromobacterium violaceum (strain ATCC 12472 / DSM 30191 / JCM 1249 / CCUG 213 / NBRC 12614 / NCIMB 9131 / NCTC 9757 / MK).